A 227-amino-acid chain; its full sequence is Cytochrome c oxidase subunit 2 (227 aa).

Residues methionine 1–serine 14 lie on the Mitochondrial intermembrane side of the membrane. The helical transmembrane segment at proline 15–threonine 45 threads the bilayer. Residues leucine 46–glutamine 59 are Mitochondrial matrix-facing. A helical membrane pass occupies residues glutamate 60–threonine 87. Over aspartate 88–leucine 227 the chain is Mitochondrial intermembrane. Cu cation-binding residues include histidine 161, cysteine 196, glutamate 198, cysteine 200, histidine 204, and methionine 207. Glutamate 198 serves as a coordination point for Mg(2+).

Belongs to the cytochrome c oxidase subunit 2 family. As to quaternary structure, component of the cytochrome c oxidase (complex IV, CIV), a multisubunit enzyme composed of 14 subunits. The complex is composed of a catalytic core of 3 subunits MT-CO1, MT-CO2 and MT-CO3, encoded in the mitochondrial DNA, and 11 supernumerary subunits COX4I, COX5A, COX5B, COX6A, COX6B, COX6C, COX7A, COX7B, COX7C, COX8 and NDUFA4, which are encoded in the nuclear genome. The complex exists as a monomer or a dimer and forms supercomplexes (SCs) in the inner mitochondrial membrane with NADH-ubiquinone oxidoreductase (complex I, CI) and ubiquinol-cytochrome c oxidoreductase (cytochrome b-c1 complex, complex III, CIII), resulting in different assemblies (supercomplex SCI(1)III(2)IV(1) and megacomplex MCI(2)III(2)IV(2)). Found in a complex with TMEM177, COA6, COX18, COX20, SCO1 and SCO2. Interacts with TMEM177 in a COX20-dependent manner. Interacts with COX20. Interacts with COX16. Cu cation serves as cofactor.

Its subcellular location is the mitochondrion inner membrane. It catalyses the reaction 4 Fe(II)-[cytochrome c] + O2 + 8 H(+)(in) = 4 Fe(III)-[cytochrome c] + 2 H2O + 4 H(+)(out). Component of the cytochrome c oxidase, the last enzyme in the mitochondrial electron transport chain which drives oxidative phosphorylation. The respiratory chain contains 3 multisubunit complexes succinate dehydrogenase (complex II, CII), ubiquinol-cytochrome c oxidoreductase (cytochrome b-c1 complex, complex III, CIII) and cytochrome c oxidase (complex IV, CIV), that cooperate to transfer electrons derived from NADH and succinate to molecular oxygen, creating an electrochemical gradient over the inner membrane that drives transmembrane transport and the ATP synthase. Cytochrome c oxidase is the component of the respiratory chain that catalyzes the reduction of oxygen to water. Electrons originating from reduced cytochrome c in the intermembrane space (IMS) are transferred via the dinuclear copper A center (CU(A)) of subunit 2 and heme A of subunit 1 to the active site in subunit 1, a binuclear center (BNC) formed by heme A3 and copper B (CU(B)). The BNC reduces molecular oxygen to 2 water molecules using 4 electrons from cytochrome c in the IMS and 4 protons from the mitochondrial matrix. The polypeptide is Cytochrome c oxidase subunit 2 (MT-CO2) (Pongo pygmaeus (Bornean orangutan)).